Reading from the N-terminus, the 413-residue chain is Mitochondrial inner membrane magnesium transporter MFM1 (413 aa).

The transit peptide at 1–35 directs the protein to the mitochondrion; the sequence is MRAFPRVLPFRHQRSYNNILLRTVRLFGSSLSSFD. N202 is a glycosylation site (N-linked (GlcNAc...) asparagine). Residues 329 to 349 traverse the membrane as a helical segment; sequence LMLLGIRYAIGMLSLGGALFL. Positions 353 to 356 match the YGMN motif; it reads YGMN. The chain crosses the membrane as a helical span at residues 367–387; it reads AYLTVTILGLISTVWLYAKGI.

Belongs to the CorA metal ion transporter (MIT) (TC 1.A.35) family. In terms of assembly, forms homooligomers. Interacts with MRS2. N-glycosylated. Glycosylation is important for correct localization of the protein.

It localises to the mitochondrion inner membrane. Its function is as follows. Mitochondrial inner membrane magnesium transporter required for mitochondrial magnesium homeostasis. Modulates the conductance of the MRS2 channel. Involved in the splicing of mRNA group II introns in mitochondria by affecting mitochondrial magnesium concentrations, which are critical for group II intron splicing. The polypeptide is Mitochondrial inner membrane magnesium transporter MFM1 (MFM1) (Saccharomyces cerevisiae (strain ATCC 204508 / S288c) (Baker's yeast)).